Reading from the N-terminus, the 456-residue chain is Amino acid transporter AVT6B (456 aa).

The next 11 helical transmembrane spans lie at 37–57 (FSGAVFNLATTIIGAGIMALP), 58–78 (ATMKILGLIPGITIIVLMAFL), 118–138 (ILVSNIGVLIVYMIIIGDVLA), 164–184 (TFVLLVTTLTVFAPLTCFKRI), 191–211 (SAISVALAVVFLVITAGITII), 236–256 (LFTVVPVLVNAYICHYNVHSI), 273–293 (ALAMCSSVYVMTSLFGYLLFG), 328–348 (LMLVFPVVFYPLRINIDGLIF), 365–385 (SITAGLIAVIFLGANFIPSIW), 388–408 (FQFTGATAAVCIGFIFPAAVI), and 423–443 (IAICMIVLAVFSNAIAIYSDA).

Belongs to the amino acid/polyamine transporter 2 family. Amino acid/auxin permease (AAAP) (TC 2.A.18.6) subfamily.

Its subcellular location is the membrane. The protein is Amino acid transporter AVT6B of Arabidopsis thaliana (Mouse-ear cress).